The sequence spans 526 residues: MKQNETFDQEREDLYHTFDEEDEESQTESSVPSTPLSRNRSEDVPVPWPRSYRQSMDLLTGVTPPTSTSFVSSFRQRRQSSVFGSFTSSPSKQQLLIDKDEIQSSVVSSIKSFLASHLQLSVPGDLLTPQENRSCTFSQSVLNGINVLCGVALLTMPYAVKEGGWLGLFILFSFGIITFYTGILLKRCLENSPGIHTYPDIGQAAFGTTGRILVSILLYVELYASCVEYIIMMSDNLSRMFPNTSLYINGFSLDSTQVFAITTTLIVLPTVWLKDLSLLSYLSAGGVISSILLALCLFWAGSVDGVGFHISGQALDITNIPVAIGIYGFGFGSHSVFPNIYSSMKEPSKFPTVLLISFAFCTLFYIAVAVCGFTMFGDAIQSQFTLNMPPHFTSSKIAVWTAVVTPMTKYALTITPVMLSLEELIPSSSRKMRSKGVSMLFRTILVLSTLVVALTVPFFATVAALIGSFIAMLIALIFPCLCYISIMKGRLTNFQIGICILIVIIGIVSGCCGTYSAIARLIGEMT.

Residues 1 to 49 (MKQNETFDQEREDLYHTFDEEDEESQTESSVPSTPLSRNRSEDVPVPWP) are disordered. Residues 8 to 18 (DQEREDLYHTF) are compositionally biased toward basic and acidic residues. A run of 11 helical transmembrane segments spans residues 140–160 (SVLNGINVLCGVALLTMPYAV), 165–185 (WLGLFILFSFGIITFYTGILL), 212–232 (ILVSILLYVELYASCVEYIIM), 253–273 (LDSTQVFAITTTLIVLPTVWL), 278–298 (LLSYLSAGGVISSILLALCLF), 320–340 (IPVAIGIYGFGFGSHSVFPNI), 353–373 (VLLISFAFCTLFYIAVAVCGF), 397–417 (IAVWTAVVTPMTKYALTITPV), 436–456 (GVSMLFRTILVLSTLVVALTV), 458–478 (FFATVAALIGSFIAMLIALIF), and 494–514 (FQIGICILIVIIGIVSGCCGT).

Belongs to the amino acid/polyamine transporter 2 family. Amino acid/auxin permease (AAAP) (TC 2.A.18.5) subfamily.

The protein localises to the membrane. This Arabidopsis thaliana (Mouse-ear cress) protein is Amino acid transporter AVT1E.